A 165-amino-acid chain; its full sequence is Calcium-binding protein H (165 aa).

EF-hand domains are found at residues 7 to 42, 43 to 78, 88 to 123, and 124 to 159; these read QIEKDVEKIIGQYDGDKNGEVTINEAIEFFKRMGSK, YPEKCAIVLFKMYDLDNEGKISYDEIQEEIFKRYQD, YFQDDIEAFLLRYDKNRDNRIDFKELEQCFESIGSD, and HPKENANHIFTEIDKNRDGYLTIAEIKNYCRNTIRS. 20 residues coordinate Ca(2+): Asp-20, Asp-22, Asn-24, Glu-26, Glu-31, Asp-56, Asp-58, Glu-60, Lys-62, Glu-67, Asp-101, Asn-103, Asp-105, Arg-107, Glu-112, Asp-137, Asn-139, Asp-141, Tyr-143, and Glu-148.

This chain is Calcium-binding protein H (cbpH), found in Dictyostelium discoideum (Social amoeba).